A 396-amino-acid chain; its full sequence is N-terminal EF-hand calcium-binding protein 3 (396 aa).

Residues Pro-14–Gly-34 show a composition bias toward pro residues. A disordered region spans residues Pro-14–Ala-36. Residues Ala-36 to Ser-71 form the EF-hand domain. 5 residues coordinate Ca(2+): Asp-49, Asn-51, Asp-53, Lys-55, and Glu-60. A required for interaction with APBA3 region spans residues Val-181–Ser-190. The segment at Ala-197 to Ala-220 is disordered. Residues Thr-206 to Ser-217 show a composition bias toward polar residues. Residues Leu-296 to Phe-385 enclose the ABM domain.

Interacts with the N-terminal domain of APBA2. Interacts with NEK2. Interacts with APBA3; APBA3 seems to mediate the interaction between NECAB3 and HIF1AN. Post-translationally, phosphorylated by NEK2. As to expression, strongly expressed in heart and skeletal muscle, moderately in brain and pancreas.

The protein resides in the golgi apparatus. Inhibits the interaction of APBA2 with amyloid-beta precursor protein (APP), and hence allows formation of amyloid-beta. May enhance the activity of HIF1A and thus promote glycolysis under normoxic conditions; the function requires its ABM domain and may implicate the stabilization of the interaction between HIF1AN and APBA3. The protein is N-terminal EF-hand calcium-binding protein 3 (NECAB3) of Homo sapiens (Human).